A 510-amino-acid polypeptide reads, in one-letter code: Probable cytochrome P450 312a1 (510 aa).

Residue C455 coordinates heme.

This sequence belongs to the cytochrome P450 family. It depends on heme as a cofactor.

It localises to the endoplasmic reticulum membrane. The protein resides in the microsome membrane. In terms of biological role, may be involved in the metabolism of insect hormones and in the breakdown of synthetic insecticides. The polypeptide is Probable cytochrome P450 312a1 (Cyp312a1) (Drosophila melanogaster (Fruit fly)).